We begin with the raw amino-acid sequence, 110 residues long: Nucleoid-associated protein Sfum_2790 (110 aa).

The protein belongs to the YbaB/EbfC family. As to quaternary structure, homodimer.

It is found in the cytoplasm. It localises to the nucleoid. Functionally, binds to DNA and alters its conformation. May be involved in regulation of gene expression, nucleoid organization and DNA protection. The chain is Nucleoid-associated protein Sfum_2790 from Syntrophobacter fumaroxidans (strain DSM 10017 / MPOB).